We begin with the raw amino-acid sequence, 148 residues long: MEKTFLMVKPDGVQRAFIGEIVARFEKKGFQLVGAKLMQVTPEIAGQHYAEHTEKPFFGELVDFITSGPVFAMVWQGEGVVDTARNMMGKTRPHEAAPGTIRGDFGVTVAKNIIHGSDSLESAEREIGIFFKEEELVDYSKLMNEWIY.

6 residues coordinate ATP: Lys-9, Phe-57, Arg-85, Thr-91, Arg-102, and Asn-112. Thr-91 is subject to Phosphothreonine. His-115 serves as the catalytic Pros-phosphohistidine intermediate. The residue at position 122 (Ser-122) is a Phosphoserine.

Belongs to the NDK family. In terms of assembly, homotetramer. Mg(2+) is required as a cofactor.

Its subcellular location is the cytoplasm. It carries out the reaction a 2'-deoxyribonucleoside 5'-diphosphate + ATP = a 2'-deoxyribonucleoside 5'-triphosphate + ADP. The catalysed reaction is a ribonucleoside 5'-diphosphate + ATP = a ribonucleoside 5'-triphosphate + ADP. Major role in the synthesis of nucleoside triphosphates other than ATP. The ATP gamma phosphate is transferred to the NDP beta phosphate via a ping-pong mechanism, using a phosphorylated active-site intermediate. The sequence is that of Nucleoside diphosphate kinase from Bacillus anthracis.